The sequence spans 191 residues: Glutathione-dependent formaldehyde-activating enzyme (191 aa).

One can recognise a CENP-V/GFA domain in the interval 22–169; sequence FAGGTLQCLC…LTELGLTPYD (148 aa). 7 residues coordinate Zn(2+): C29, C31, C50, C52, C55, C97, and C100.

It belongs to the Gfa family. The cofactor is Zn(2+).

The catalysed reaction is S-(hydroxymethyl)glutathione = glutathione + formaldehyde. Its pathway is one-carbon metabolism; formaldehyde degradation; formate from formaldehyde (glutathione route): step 1/3. Its function is as follows. Catalyzes the condensation of formaldehyde and glutathione to S-hydroxymethylglutathione. This chain is Glutathione-dependent formaldehyde-activating enzyme, found in Xanthomonas campestris pv. campestris (strain B100).